Consider the following 258-residue polypeptide: Phosphoribosylaminoimidazole-succinocarboxamide synthase (258 aa).

This sequence belongs to the SAICAR synthetase family.

It catalyses the reaction 5-amino-1-(5-phospho-D-ribosyl)imidazole-4-carboxylate + L-aspartate + ATP = (2S)-2-[5-amino-1-(5-phospho-beta-D-ribosyl)imidazole-4-carboxamido]succinate + ADP + phosphate + 2 H(+). It participates in purine metabolism; IMP biosynthesis via de novo pathway; 5-amino-1-(5-phospho-D-ribosyl)imidazole-4-carboxamide from 5-amino-1-(5-phospho-D-ribosyl)imidazole-4-carboxylate: step 1/2. The chain is Phosphoribosylaminoimidazole-succinocarboxamide synthase from Maricaulis maris (strain MCS10) (Caulobacter maris).